Consider the following 37-residue polypeptide: Large ribosomal subunit protein bL36B (37 aa).

This sequence belongs to the bacterial ribosomal protein bL36 family.

This is Large ribosomal subunit protein bL36B from Aeromonas salmonicida (strain A449).